The following is a 327-amino-acid chain: Glycerol-3-phosphate dehydrogenase [NAD(P)+] (327 aa).

Positions 10, 11, 31, and 108 each coordinate NADPH. Residues Lys-108, Gly-136, and Ser-138 each contribute to the sn-glycerol 3-phosphate site. Residue Ala-140 coordinates NADPH. Residues Lys-191, Asp-246, Ser-256, Arg-257, and Asn-258 each coordinate sn-glycerol 3-phosphate. Catalysis depends on Lys-191, which acts as the Proton acceptor. Arg-257 contributes to the NADPH binding site. NADPH is bound by residues Leu-281 and Glu-283.

Belongs to the NAD-dependent glycerol-3-phosphate dehydrogenase family.

Its subcellular location is the cytoplasm. It carries out the reaction sn-glycerol 3-phosphate + NAD(+) = dihydroxyacetone phosphate + NADH + H(+). The catalysed reaction is sn-glycerol 3-phosphate + NADP(+) = dihydroxyacetone phosphate + NADPH + H(+). Its pathway is membrane lipid metabolism; glycerophospholipid metabolism. Functionally, catalyzes the reduction of the glycolytic intermediate dihydroxyacetone phosphate (DHAP) to sn-glycerol 3-phosphate (G3P), the key precursor for phospholipid synthesis. The sequence is that of Glycerol-3-phosphate dehydrogenase [NAD(P)+] from Ehrlichia ruminantium (strain Gardel).